The following is a 77-amino-acid chain: Translation initiation factor IF-1, chloroplastic (77 aa).

One can recognise an S1-like domain in the interval 1 to 72; it reads MNKQGLFQME…TKGRIVYRQR (72 aa).

This sequence belongs to the IF-1 family. As to quaternary structure, component of the 30S ribosomal translation pre-initiation complex which assembles on the 30S ribosome in the order IF-2 and IF-3, IF-1 and N-formylmethionyl-tRNA(fMet); mRNA recruitment can occur at any time during PIC assembly.

It localises to the plastid. Its subcellular location is the chloroplast. In terms of biological role, one of the essential components for the initiation of protein synthesis. Stabilizes the binding of IF-2 and IF-3 on the 30S subunit to which N-formylmethionyl-tRNA(fMet) subsequently binds. Helps modulate mRNA selection, yielding the 30S pre-initiation complex (PIC). Upon addition of the 50S ribosomal subunit IF-1, IF-2 and IF-3 are released leaving the mature 70S translation initiation complex. This Nephroselmis olivacea (Green alga) protein is Translation initiation factor IF-1, chloroplastic.